Consider the following 202-residue polypeptide: MPKPTKGPRLGGSPSHQRLILSNLATQLFEHGRITTTESRARALRPHAEKLITKAKKGDLHNRREVLKTIRDKSVVHTLFTEIAPTFAERPGGYTRITKIGPRKGDNAPMAVIELVTEAYKPSAPKAKKAAPAATAPAPVEEAPAEETVAEETAVEEAPTELTDEASPEESVVTEEQPVEDEAATEEPAAESTEESTEDDKA.

The segment covering 130–142 (AAPAATAPAPVEE) has biased composition (low complexity). Residues 130-202 (AAPAATAPAP…TEESTEDDKA (73 aa)) are disordered. 2 stretches are compositionally biased toward acidic residues: residues 143 to 168 (APAEETVAEETAVEEAPTELTDEASP) and 177 to 202 (QPVEDEAATEEPAAESTEESTEDDKA).

Belongs to the bacterial ribosomal protein bL17 family. In terms of assembly, part of the 50S ribosomal subunit. Contacts protein L32.

The sequence is that of Large ribosomal subunit protein bL17 from Nocardioides sp. (strain ATCC BAA-499 / JS614).